Here is a 237-residue protein sequence, read N- to C-terminus: B3 domain-containing protein Os06g0194400 (237 aa).

Disordered regions lie at residues 1-23 (MIEAESQMAEAASYEEQRRRQVE) and 38-82 (SAAV…LPEK). The segment at residues 139–230 (FVKPMLQSHV…KFKVYIIRAS (92 aa)) is a DNA-binding region (TF-B3).

Its subcellular location is the nucleus. This chain is B3 domain-containing protein Os06g0194400, found in Oryza sativa subsp. japonica (Rice).